The chain runs to 130 residues: Small ribosomal subunit protein uS9 (130 aa).

The protein belongs to the universal ribosomal protein uS9 family.

The sequence is that of Small ribosomal subunit protein uS9 from Variovorax paradoxus (strain S110).